Reading from the N-terminus, the 274-residue chain is MRVLRSPAKVNLGLWVTGKRADGYHDIVTVFHTVDFHDRIFIKRSHSLKIKTSSPLIPEGEENIVYKALKRFEEWTGVSPEVEVFIEKNIPAGAGLGGGSSNAAVVLKEVNSMYGEILSEKELSELASTIGADVPFFLKGGLAVAEGIGDKLRFLDKKIEREIFIIYPAVHVSTKEIYSKVTPDILTKKEDLHIIDSLLDDFEYFLENIENTLGEIALESYPQMREVYNTLEYLGYKPFVSGSGSSIFAFGKPEAEIEKICQVKGWKLIKTVLR.

Lys-9 is a catalytic residue. 91–101 (PAGAGLGGGSS) is a binding site for ATP. Asp-133 is an active-site residue.

It belongs to the GHMP kinase family. IspE subfamily.

It carries out the reaction 4-CDP-2-C-methyl-D-erythritol + ATP = 4-CDP-2-C-methyl-D-erythritol 2-phosphate + ADP + H(+). Its pathway is isoprenoid biosynthesis; isopentenyl diphosphate biosynthesis via DXP pathway; isopentenyl diphosphate from 1-deoxy-D-xylulose 5-phosphate: step 3/6. Functionally, catalyzes the phosphorylation of the position 2 hydroxy group of 4-diphosphocytidyl-2C-methyl-D-erythritol. The sequence is that of 4-diphosphocytidyl-2-C-methyl-D-erythritol kinase from Persephonella marina (strain DSM 14350 / EX-H1).